We begin with the raw amino-acid sequence, 372 residues long: Ligninase B (372 aa).

Residues 1–21 (MAFKQLFAAISLALSLSAANA) form the signal peptide. Positions 22 to 28 (AAVIEKR) are excised as a propeptide. Cystine bridges form between Cys-31–Cys-43, Cys-42–Cys-313, Cys-62–Cys-148, and Cys-277–Cys-345. His-75 functions as the Proton acceptor in the catalytic mechanism. The Ca(2+) site is built by Asp-76, Gly-94, Asp-96, and Ser-98. His-204 is a heme b binding site. Residues Ser-205, Asp-222, Thr-224, Ile-227, and Asp-229 each coordinate Ca(2+). An N-linked (GlcNAc...) asparagine glycan is attached at Asn-285. Over residues 350 to 361 (FPTLTTLPGPET) the composition is skewed to low complexity. The segment at 350 to 372 (FPTLTTLPGPETSVQRIPPPPGA) is disordered.

The protein belongs to the peroxidase family. Ligninase subfamily. The cofactor is heme b. It depends on Ca(2+) as a cofactor.

It carries out the reaction 1-(3,4-dimethoxyphenyl)-2-(2-methoxyphenoxy)propane-1,3-diol + H2O2 = 3,4-dimethoxybenzaldehyde + guaiacol + glycolaldehyde + H2O. The catalysed reaction is 2 (3,4-dimethoxyphenyl)methanol + H2O2 = 2 (3,4-dimethoxyphenyl)methanol radical + 2 H2O. Its pathway is secondary metabolite metabolism; lignin degradation. Functionally, depolymerization of lignin. Catalyzes the C(alpha)-C(beta) cleavage of the propyl side chains of lignin. The protein is Ligninase B (LIPB) of Phanerodontia chrysosporium (White-rot fungus).